A 2559-amino-acid polypeptide reads, in one-letter code: Stabilin-2 (2559 aa).

The N-terminal stretch at 1–28 is a signal peptide; it reads MARSKLLLGKLLPLILIFLGLLVQNACS. Topologically, residues 29 to 2464 are extracellular; the sequence is PTEAPELTKR…PPTAATAAHS (2436 aa). Residue N71 is glycosylated (N-linked (GlcNAc...) asparagine). EGF-like domains are found at residues 116 to 156, 164 to 201, 203 to 244, 245 to 284, and 330 to 370; these read DCME…TACE, FGPNCSAVCSCVHGVCNSGISGDGTCECLSAYRGPRCD, PIPE…QTCK, PINPCLKNVCHPHASCSYLGPNRHSCVCQKGYQGDGQVCL, and MTDI…LNCY. 3 disulfides stabilise this stretch: C120–C134, C128–C144, and C146–C155. N-linked (GlcNAc...) asparagine glycosylation is present at N167. Cystine bridges form between C168-C179, C172-C189, C191-C200, C207-C218, C212-C230, C232-C243, C249-C260, C254-C270, C272-C283, C334-C346, C340-C356, and C358-C369. N-linked (GlcNAc...) asparagine glycosylation occurs at N345. 2 FAS1 domains span residues 379–512 and 522–659; these read ELNT…DRAM and NPQQ…TGVL. 4 N-linked (GlcNAc...) asparagine glycosylation sites follow: N572, N626, N673, and N691. The region spanning 743-783 is the EGF-like 6 domain; sequence DCNPCPGGFMNPCSGNGQCIDGLGGNGTCICEDGFQGSRCQ. 3 disulfides stabilise this stretch: C747–C761, C755–C771, and C773–C782. N768 carries an N-linked (GlcNAc...) asparagine glycan. N796 is a glycosylation site (N-linked (GlcNAc...) asparagine). EGF-like domains are found at residues 833–873, 874–917, 918–960, and 961–1002; these read QTSA…TLCS, KKDP…RDCV, EINS…IDCE, and PIIS…VLCY. Cystine bridges form between C837-C850, C844-C859, C861-C872, C878-C893, C887-C903, C905-C916, C922-C936, C930-C946, C948-C959, C965-C978, C972-C988, and C990-C1001. N854 is a glycosylation site (N-linked (GlcNAc...) asparagine). N933 carries an N-linked (GlcNAc...) asparagine glycan. 2 consecutive FAS1 domains span residues 1002–1135 and 1145–1273; these read YGNV…NKVL and LPSL…EKVL. N1024, N1036, N1108, N1255, and N1283 each carry an N-linked (GlcNAc...) asparagine glycan. In terms of domain architecture, Laminin EGF-like 1 spans 1350–1415; that stretch reads PQCQACPGKG…CSCVHGRCNQ (66 aa). 18 disulfide bridges follow: C1355/C1369, C1363/C1379, C1381/C1390, C1402/C1413, C1406/C1423, C1425/C1434, C1443/C1453, C1447/C1463, C1465/C1476, C1482/C1495, C1489/C1505, C1507/C1518, C1524/C1537, C1531/C1547, C1549/C1560, C1566/C1579, C1573/C1589, and C1591/C1602. Residues N1374 and N1386 are each glycosylated (N-linked (GlcNAc...) asparagine). 4 EGF-like domains span residues 1439-1477, 1478-1519, 1520-1561, and 1562-1603; these read TTDNCNGTCHTSANCLLDPDGKASCKCAAGFQGNGTVCT, AINA…IVCL, EINP…KVCT, and LINV…IVCR. N1444 is a glycosylation site (N-linked (GlcNAc...) asparagine). N1472 carries N-linked (GlcNAc...) asparagine glycosylation. N1580 carries N-linked (GlcNAc...) asparagine glycosylation. 2 FAS1 domains span residues 1603-1731 and 1747-1888; these read RGSI…DTLL and VLLN…DCLL. Residue N1750 is glycosylated (N-linked (GlcNAc...) asparagine). One can recognise a Laminin EGF-like 2 domain in the interval 1965-2030; it reads PDCQACPGGP…GCSEHGQCDE (66 aa). 17 cysteine pairs are disulfide-bonded: C1970–C1984, C1978–C1994, C1996–C2005, C2017–C2028, C2022–C2038, C2040–C2049, C2059–C2069, C2063–C2075, C2077–C2088, C2094–C2107, C2101–C2116, C2118–C2129, C2135–C2149, C2143–C2159, C2161–C2172, C2228–C2296, and C2252–C2273. A glycan (N-linked (GlcNAc...) asparagine) is linked at N2001. EGF-like domains are found at residues 2055–2089, 2090–2130, and 2131–2173; these read VIPVCIPACSMHATCMENNTCVCNLNYEGDGITCT, VVDF…HSCT, and EIDP…RDCE. A glycan (N-linked (GlcNAc...) asparagine) is linked at N2072. A Link domain is found at 2206–2298; that stretch reads GVFHLRSPLG…SEMWDVFCYR (93 aa). 5 N-linked (GlcNAc...) asparagine glycosylation sites follow: N2287, N2303, N2375, N2391, and N2400. Residues 2318–2452 enclose the FAS1 7 domain; it reads NGNLLQVLMS…GVLHIISEPL (135 aa). Residues 2465-2485 form a helical membrane-spanning segment; sequence GLGTGIFCAVVLVTGAIALAA. Topologically, residues 2486-2559 are cytoplasmic; that stretch reads YSYFRLNQRT…NSDPLGALRS (74 aa). The residue at position 2503 (S2503) is a Phosphoserine. The interval 2510–2520 is interaction with TMSB4X; that stretch reads LAFGKQQPESI. Residues 2514–2559 are disordered; sequence KQQPESITNPLYETSTPAAPEPSCDPFTDSGERELENSDPLGALRS. A compositionally biased stretch (polar residues) spans 2516-2530; the sequence is QPESITNPLYETSTP.

In terms of assembly, interacts with heparin, alpha-M/beta-2 integrin (ITGAM and ITGB2), and thymosin beta 4 (TMSB4X). Interacts with GULP1. Associates with clathrin and adapter protein AP-2; in liver sinusoidal endothelial cells (LSECs). In terms of processing, glycosylated. Proteolytically processed to yield a smaller protein. As to expression, expressed in endothelial sinuses of liver, lymph nodes, bone marrow, spleen and in specialised structures of eye, heart, brain and kidney. Expression is detected in corneal and lens epithelium, in mesenchymal cells of the heart valves, in the ependymal cells lining the ventricles in the brain, and in the prismatic epithelial cells covering the renal papillae.

The protein localises to the cytoplasm. It is found in the cell membrane. In terms of biological role, phosphatidylserine receptor that enhances the engulfment of apoptotic cells. Hyaluronan receptor that binds to and mediates endocytosis of hyaluronic acid (HA). Also acts, in different species, as a primary systemic scavenger receptor for heparin (Hep), chondroitin sulfate (CS), dermatan sulfate (DS), nonglycosaminoglycan (GAG), acetylated low-density lipoprotein (AcLDL), pro-collagen propeptides and advanced glycation end products (AGE). May serve to maintain tissue integrity by supporting extracellular matrix turnover or it may contribute to maintaining fluidity of bodily liquids by resorption of hyaluronan. Counter receptor which plays an important role in lymphocyte recruitment in the hepatic vasculature. Binds to both Gram-positive and Gram-negative bacteria and may play a role in defense against bacterial infection. The proteolytically processed short form also functions as an endocytosis receptor for heparin internalization as well as HA and CS. The chain is Stabilin-2 from Mus musculus (Mouse).